We begin with the raw amino-acid sequence, 648 residues long: Biosynthetic arginine decarboxylase (648 aa).

N6-(pyridoxal phosphate)lysine is present on Lys109. 291-301 (IDVGGGLGIDF) is a substrate binding site.

It belongs to the Orn/Lys/Arg decarboxylase class-II family. SpeA subfamily. It depends on Mg(2+) as a cofactor. Requires pyridoxal 5'-phosphate as cofactor.

The catalysed reaction is L-arginine + H(+) = agmatine + CO2. It functions in the pathway amine and polyamine biosynthesis; agmatine biosynthesis; agmatine from L-arginine: step 1/1. In terms of biological role, catalyzes the biosynthesis of agmatine from arginine. The sequence is that of Biosynthetic arginine decarboxylase from Prochlorococcus marinus (strain MIT 9312).